Reading from the N-terminus, the 181-residue chain is Ribulose bisphosphate carboxylase small subunit, chloroplastic 1 (181 aa).

Residues 1–57 (MASSIVSSAAVATRSNVAQASMVAPFTGLKSAASFPVTKKNNNVDITSLASNGGRVR) constitute a chloroplast transit peptide.

The protein belongs to the RuBisCO small chain family. In terms of assembly, heterohexadecamer of 8 large and 8 small subunits.

It localises to the plastid. The protein resides in the chloroplast. In terms of biological role, ruBisCO catalyzes two reactions: the carboxylation of D-ribulose 1,5-bisphosphate, the primary event in carbon dioxide fixation, as well as the oxidative fragmentation of the pentose substrate. Both reactions occur simultaneously and in competition at the same active site. Although the small subunit is not catalytic it is essential for maximal activity. The protein is Ribulose bisphosphate carboxylase small subunit, chloroplastic 1 of Solanum tuberosum (Potato).